Consider the following 150-residue polypeptide: U1 small nuclear ribonucleoprotein C (150 aa).

The Matrin-type zinc-finger motif lies at 4–36 (YYCDYCKSYLTHDTMSVRKSHLQGRNHIKFYCD). The segment at 66-127 (SDAKKSNGSS…PPNLSGLPLP (62 aa)) is disordered. Residues 80 to 92 (DIDKKENSSDHNK) are compositionally biased toward basic and acidic residues. Over residues 103-112 (NDNDDDDDEM) the composition is skewed to acidic residues.

Belongs to the U1 small nuclear ribonucleoprotein C family. U1 snRNP is composed of the 7 core Sm proteins B/B', D1, D2, D3, E, F and G that assemble in a heptameric protein ring on the Sm site of the small nuclear RNA to form the core snRNP, and at least 3 U1 snRNP-specific proteins U1-70K, U1-A and U1-C. U1-C interacts with U1 snRNA and the 5' splice-site region of the pre-mRNA.

The protein resides in the nucleus. Functionally, component of the spliceosomal U1 snRNP, which is essential for recognition of the pre-mRNA 5' splice-site and the subsequent assembly of the spliceosome. U1-C is directly involved in initial 5' splice-site recognition for both constitutive and regulated alternative splicing. The interaction with the 5' splice-site seems to precede base-pairing between the pre-mRNA and the U1 snRNA. Stimulates commitment or early (E) complex formation by stabilizing the base pairing of the 5' end of the U1 snRNA and the 5' splice-site region. This is U1 small nuclear ribonucleoprotein C from Candida albicans (strain WO-1) (Yeast).